Consider the following 456-residue polypeptide: Exodeoxyribonuclease 7 large subunit (456 aa).

Belongs to the XseA family. As to quaternary structure, heterooligomer composed of large and small subunits.

The protein resides in the cytoplasm. It catalyses the reaction Exonucleolytic cleavage in either 5'- to 3'- or 3'- to 5'-direction to yield nucleoside 5'-phosphates.. In terms of biological role, bidirectionally degrades single-stranded DNA into large acid-insoluble oligonucleotides, which are then degraded further into small acid-soluble oligonucleotides. This chain is Exodeoxyribonuclease 7 large subunit, found in Shigella flexneri serotype 5b (strain 8401).